Here is a 388-residue protein sequence, read N- to C-terminus: GTPase Obg (388 aa).

The 159-residue stretch at 1–159 (MKFIDEASIR…RSLRLELLLL (159 aa)) folds into the Obg domain. The OBG-type G domain maps to 160 to 333 (ADVGLLGMPN…LSLKLLDYIA (174 aa)). Residues 166–173 (GMPNAGKS), 191–195 (FTTLV), 213–216 (DIPG), 283–286 (NKTD), and 314–316 (SAF) contribute to the GTP site. Mg(2+) contacts are provided by Ser-173 and Thr-193.

It belongs to the TRAFAC class OBG-HflX-like GTPase superfamily. OBG GTPase family. In terms of assembly, monomer. The cofactor is Mg(2+).

The protein resides in the cytoplasm. Its function is as follows. An essential GTPase which binds GTP, GDP and possibly (p)ppGpp with moderate affinity, with high nucleotide exchange rates and a fairly low GTP hydrolysis rate. Plays a role in control of the cell cycle, stress response, ribosome biogenesis and in those bacteria that undergo differentiation, in morphogenesis control. The protein is GTPase Obg of Shewanella denitrificans (strain OS217 / ATCC BAA-1090 / DSM 15013).